The sequence spans 399 residues: Phosphoglycerate kinase (399 aa).

Substrate is bound by residues 21–23 (DFN), Arg36, 59–62 (HLGR), Arg120, and Arg158. Residues Lys209, Gly297, Glu328, and 355–358 (GGDS) contribute to the ATP site.

This sequence belongs to the phosphoglycerate kinase family. As to quaternary structure, monomer.

The protein resides in the cytoplasm. It catalyses the reaction (2R)-3-phosphoglycerate + ATP = (2R)-3-phospho-glyceroyl phosphate + ADP. It participates in carbohydrate degradation; glycolysis; pyruvate from D-glyceraldehyde 3-phosphate: step 2/5. The chain is Phosphoglycerate kinase from Streptococcus suis (strain 05ZYH33).